A 162-amino-acid polypeptide reads, in one-letter code: Peroxiredoxin-2C (162 aa).

One can recognise a Thioredoxin domain in the interval 4–162 (VAVGDTLPDG…SGAEEILKAL (159 aa)). The Cysteine sulfenic acid (-SOH) intermediate role is filled by Cys-51.

This sequence belongs to the peroxiredoxin family. Prx5 subfamily. In terms of assembly, monomer.

Its subcellular location is the cytoplasm. It catalyses the reaction [glutaredoxin]-dithiol + a hydroperoxide = [glutaredoxin]-disulfide + an alcohol + H2O. Its function is as follows. Reduces hydrogen peroxide and alkyl hydroperoxides with reducing equivalents provided through the thioredoxin or glutaredoxin system. May be involved in intracellular redox signaling. Thiol-specific peroxidase that catalyzes the reduction of hydrogen peroxide and organic hydroperoxides to water and alcohols, respectively. Plays a role in cell protection against oxidative stress by detoxifying peroxides. The polypeptide is Peroxiredoxin-2C (PRXIIC) (Oryza sativa subsp. japonica (Rice)).